Consider the following 308-residue polypeptide: uncharacterized protein (308 aa).

7 helical membrane-spanning segments follow: residues 10–30, 91–111, 115–135, 178–198, 219–239, 251–271, and 288–308; these read IILL…TNLI, LPTI…VVIL, LGLI…LIGI, VIPM…LGLM, ITVL…VDIL, LIVL…KHSI, and INYT…IAFF.

To M.jannaschii MJ0871, MJ1556 and MJ1589.

The protein localises to the cell membrane. This is an uncharacterized protein from Methanocaldococcus jannaschii (strain ATCC 43067 / DSM 2661 / JAL-1 / JCM 10045 / NBRC 100440) (Methanococcus jannaschii).